Consider the following 248-residue polypeptide: 5'-nucleotidase SurE (248 aa).

4 residues coordinate a divalent metal cation: Asp-8, Asp-9, Ser-39, and Asn-91.

The protein belongs to the SurE nucleotidase family. The cofactor is a divalent metal cation.

It localises to the cytoplasm. It catalyses the reaction a ribonucleoside 5'-phosphate + H2O = a ribonucleoside + phosphate. In terms of biological role, nucleotidase that shows phosphatase activity on nucleoside 5'-monophosphates. The chain is 5'-nucleotidase SurE from Neisseria meningitidis serogroup A / serotype 4A (strain DSM 15465 / Z2491).